The following is a 208-amino-acid chain: Small ribosomal subunit protein uS4 (208 aa).

The S4 RNA-binding domain occupies 98 to 159 (RRLDNVVYRL…KSRKIVSIND (62 aa)).

The protein belongs to the universal ribosomal protein uS4 family. As to quaternary structure, part of the 30S ribosomal subunit. Contacts protein S5. The interaction surface between S4 and S5 is involved in control of translational fidelity.

Its function is as follows. One of the primary rRNA binding proteins, it binds directly to 16S rRNA where it nucleates assembly of the body of the 30S subunit. In terms of biological role, with S5 and S12 plays an important role in translational accuracy. This Pelobacter propionicus (strain DSM 2379 / NBRC 103807 / OttBd1) protein is Small ribosomal subunit protein uS4.